Here is a 181-residue protein sequence, read N- to C-terminus: Large ribosomal subunit protein uL5 (181 aa).

This sequence belongs to the universal ribosomal protein uL5 family. Part of the 50S ribosomal subunit; part of the 5S rRNA/L5/L18/L25 subcomplex. Contacts the 5S rRNA and the P site tRNA. Forms a bridge to the 30S subunit in the 70S ribosome.

In terms of biological role, this is one of the proteins that bind and probably mediate the attachment of the 5S RNA into the large ribosomal subunit, where it forms part of the central protuberance. In the 70S ribosome it contacts protein S13 of the 30S subunit (bridge B1b), connecting the 2 subunits; this bridge is implicated in subunit movement. Contacts the P site tRNA; the 5S rRNA and some of its associated proteins might help stabilize positioning of ribosome-bound tRNAs. This chain is Large ribosomal subunit protein uL5, found in Helicobacter hepaticus (strain ATCC 51449 / 3B1).